Reading from the N-terminus, the 338-residue chain is Mitochondrial glutathione transporter SLC25A40 (338 aa).

3 Solcar repeats span residues 13–131 (VTPL…LTAL), 139–223 (NESR…LKKW), and 233–327 (PTFM…GKSF). Transmembrane regions (helical) follow at residues 19-39 (MFASCTGAILTSLMVTPFDVV), 103-123 (LWSGLPPTLVMAVPATVIYFT), 145-165 (IVAGIVARLGAVTVISPLELI), 199-220 (WAPTILRDVPFSAMYWYNYEVL), 239-259 (FTSGALSGSFAAVVTLPFDVV), and 298-318 (GLFTGLIPRLIKIAPACAVMI).

This sequence belongs to the mitochondrial carrier (TC 2.A.29) family.

It is found in the mitochondrion inner membrane. It carries out the reaction glutathione(in) = glutathione(out). Its function is as follows. Probable mitochondrial transporter required for glutathione import into mitochondria. Glutathione, which plays key roles in oxidative metabolism, is produced exclusively in the cytosol and is imported in many organelles. Mitochondrial glutathione is required for the activity and stability of proteins containing iron-sulfur clusters, as well as erythropoiesis. The sequence is that of Mitochondrial glutathione transporter SLC25A40 from Bos taurus (Bovine).